A 777-amino-acid chain; its full sequence is Reticulon-1 (777 aa).

Disordered stretches follow at residues 1-77, 129-182, 198-245, and 293-573; these read MAAP…ETAS, NGHI…ILAD, TRPQ…PVEG, and ATHE…IPGP. S13 and S68 each carry phosphoserine. Residues 199-233 show a composition bias toward basic and acidic residues; the sequence is RPQEAKGQEEQSPGLEDKDLDFKDKDSEVSTKPEG. Residues S210, S241, and S325 each carry the phosphoserine modification. A compositionally biased stretch (low complexity) spans 326–339; that stretch reads PGSVTPPSSGTEPS. Phosphoserine occurs at positions 348 and 350. The segment covering 393–406 has biased composition (polar residues); the sequence is IPSSLDQEASSAES. The residue at position 485 (S485) is a Phosphoserine. Residues 495-510 are compositionally biased toward basic and acidic residues; the sequence is AIREETSSRATEERAP. Residues 525–534 are compositionally biased toward polar residues; that stretch reads TPVTLQSRPE. The region spanning 590 to 777 is the Reticulon domain; the sequence is AIDLLYWRDI…KIPGAKRHAE (188 aa). Helical transmembrane passes span 604–624 and 706–726; these read IVFG…VVSV and FAVL…LTLL.

In terms of assembly, interacts with NDRG1. Interacts with BACE1. Interacts with TMEM33. As to quaternary structure, interacts with UGCG; regulates the ceramide glucosyltransferase activity of UGCG. Expressed predominantly in central and peripheral nervous system of newborn and adult rats. Low levels have been also detected in heart, adrenal gland and spleen. Expression of isoform RTN1-B is restricted to particular neuronal types.

It localises to the endoplasmic reticulum membrane. The protein resides in the golgi apparatus membrane. In terms of biological role, inhibits amyloid precursor protein processing, probably by blocking BACE1 activity. In Rattus norvegicus (Rat), this protein is Reticulon-1 (Rtn1).